A 678-amino-acid chain; its full sequence is THO complex subunit 5 homolog A (678 aa).

Disordered stretches follow at residues 1–35 (MASDSLKKRKPKVNRNEDVKRGRHEDQEGRYYSEE) and 294–329 (ALFKPPEDSQDDESDSDAEEEQTTKRRRPTLGVQLD). The Nuclear localization signal motif lies at 7 to 10 (KKRK). A compositionally biased stretch (basic and acidic residues) spans 14 to 35 (NRNEDVKRGRHEDQEGRYYSEE). The span at 301-314 (DSQDDESDSDAEEE) shows a compositional bias: acidic residues.

Belongs to the THOC5 family. In terms of assembly, component of the THO subcomplex, which is composed of thoc1, thoc2, thoc3, thoc5, thoc6 and thoc7. Component of the transcription/export (TREX) complex at least composed of alyref/thoc4, ddx39b, sarnp/cip29, chtop and the THO subcomplex. Interacts with thoc7.

It is found in the nucleus. The protein localises to the nucleus speckle. The protein resides in the cytoplasm. Its function is as follows. Component of the THO subcomplex of the TREX complex which is thought to couple mRNA transcription, processing and nuclear export, and which specifically associates with spliced mRNA and not with unspliced pre-mRNA. Plays a key structural role in the oligomerization of the THO-ddx39b complex. TREX is recruited to spliced mRNAs by a transcription-independent mechanism, binds to mRNA upstream of the exon-junction complex (EJC) and is recruited in a splicing- and cap-dependent manner to a region near the 5' end of the mRNA where it functions in mRNA export to the cytoplasm via the TAP/NXF1 pathway. May be involved in cell differentiation. The sequence is that of THO complex subunit 5 homolog A (thoc5-a) from Xenopus laevis (African clawed frog).